The chain runs to 299 residues: MASSLTLPMAMAFTLLALSFASAMGGSMNSSRFDELFQPSWAFDHFVYEGEVLKMKLDNYSGAGFSSKGKYLFGKVTVQIKLVEGDSAGTVTAFYMSSDGTNHNEFDFEFLGNTTGEPYLVQTNVYVNGVGNREQRLNLWFDPTKDFHSYSLLWNQRQVVFMVDETPIRVHSNLEHRGIPFPKDQPMGVYSSIWNADDWATQGGRIKTDWSHAPFVASYQGFAIDACECPAAVAATDNARRCSSSAEKQFWWDMPTLSELSLHQSHQLIWVRANHLVYDYCTDTARFPVTPAECEHHRH.

A signal peptide spans 1–25 (MASSLTLPMAMAFTLLALSFASAMG). Positions 26–219 (GSMNSSRFDE…WSHAPFVASY (194 aa)) constitute a GH16 domain. Glu105 (nucleophile) is an active-site residue. The active-site Proton donor is the Glu109. Residue Glu109 participates in xyloglucan binding. A glycan (N-linked (GlcNAc...) asparagine) is linked at Asn113. Xyloglucan-binding positions include 122-124 (QTN), 132-134 (NRE), 198-199 (DW), and Gly203. 2 cysteine pairs are disulfide-bonded: Cys227–Cys242 and Cys281–Cys294. A xyloglucan-binding site is contributed by Arg286.

The protein belongs to the glycosyl hydrolase 16 family. XTH group 1 subfamily. Contains at least one intrachain disulfide bond essential for its enzymatic activity. Highest expression in ripe leaves after full expansion. Also expressed in fruits, and at a lower level in flowers and stems (picked at anthesis).

The protein resides in the secreted. It localises to the cell wall. The protein localises to the extracellular space. It is found in the apoplast. It carries out the reaction breaks a beta-(1-&gt;4) bond in the backbone of a xyloglucan and transfers the xyloglucanyl segment on to O-4 of the non-reducing terminal glucose residue of an acceptor, which can be a xyloglucan or an oligosaccharide of xyloglucan.. Its function is as follows. Catalyzes xyloglucan endotransglycosylation (XET). Cleaves and religates xyloglucan polymers. Does not catalyze xyloglucan endohydrolysis (XEH). Probably involved in cell wall restructuring during postharvest fruit softening. This is Xyloglucan endotransglucosylase protein 6 from Diospyros kaki (Kaki persimmon).